Consider the following 648-residue polypeptide: Threonine--tRNA ligase (648 aa).

The region spanning Met-1–Thr-62 is the TGS domain. The catalytic stretch occupies residues Asp-243–Pro-536. Residues Cys-336, His-387, and His-513 each contribute to the Zn(2+) site.

Belongs to the class-II aminoacyl-tRNA synthetase family. In terms of assembly, homodimer. Requires Zn(2+) as cofactor.

It localises to the cytoplasm. The catalysed reaction is tRNA(Thr) + L-threonine + ATP = L-threonyl-tRNA(Thr) + AMP + diphosphate + H(+). In terms of biological role, catalyzes the attachment of threonine to tRNA(Thr) in a two-step reaction: L-threonine is first activated by ATP to form Thr-AMP and then transferred to the acceptor end of tRNA(Thr). Also edits incorrectly charged L-seryl-tRNA(Thr). The sequence is that of Threonine--tRNA ligase from Magnetococcus marinus (strain ATCC BAA-1437 / JCM 17883 / MC-1).